A 302-amino-acid chain; its full sequence is Recombination-associated protein RdgC (302 aa).

Belongs to the RdgC family.

Its subcellular location is the cytoplasm. It localises to the nucleoid. Functionally, may be involved in recombination. The sequence is that of Recombination-associated protein RdgC from Actinobacillus pleuropneumoniae serotype 3 (strain JL03).